The primary structure comprises 470 residues: Sperm-associated antigen 8 (470 aa).

Residues 1–21 are compositionally biased toward polar residues; it reads METTESTEGSLSRSCDVQPSS. Disordered stretches follow at residues 1 to 70, 117 to 178, and 302 to 321; these read METT…PPAH, SGTC…GQGP, and LTTQ…DSYQ. Residues 27–48 show a composition bias toward low complexity; the sequence is PSEPVPSSSSSPRSTAPAEAPA. Polar residues predominate over residues 51 to 60; the sequence is SVLTEPSSDS. Composition is skewed to low complexity over residues 122–175 and 303–316; these read LGQS…ADPG and TTQP…STTQ. Mn stretches follow at residues 312–325 and 364–378; these read SSTT…LPRH and ESVT…LVRA.

Belongs to the SPAG8 family. As to quaternary structure, microtubule inner protein component of sperm flagellar doublet microtubules. Interacts with FHL5 (via second LIM domain). Interacts with RANBP9. In terms of tissue distribution, expressed in testis (at protein level). Not detected in brain, heart, kidney, spleen, liver, lung, thymus and colon (at protein level).

Its subcellular location is the cytoplasm. It localises to the nucleus. The protein resides in the cytoplasmic vesicle. It is found in the secretory vesicle. The protein localises to the acrosome. Its subcellular location is the cytoskeleton. It localises to the microtubule organizing center. The protein resides in the spindle. It is found in the cilium axoneme. The protein localises to the flagellum axoneme. Functionally, microtubule inner protein (MIP) part of the dynein-decorated doublet microtubules (DMTs) in cilia axoneme, which is required for motile cilia beating. Plays a role in spermatogenesis by enhancing the binding of CREM isoform tau to its coactivator FHL5 and increasing the FHL5-regulated transcriptional activation of CREM isoform tau. Involved in the acrosome reaction and in binding of sperm to the zona pellucida. Plays a role in regulation of the cell cycle by controlling progression through the G2/M phase, possibly by delaying the activation of CDK1 which is required for entry into mitosis. May play a role in fertility and microtubule formation through interaction with RANBP9. This Mus musculus (Mouse) protein is Sperm-associated antigen 8.